A 113-amino-acid polypeptide reads, in one-letter code: Large ribosomal subunit protein uL24 (113 aa).

This sequence belongs to the universal ribosomal protein uL24 family. As to quaternary structure, part of the 50S ribosomal subunit.

One of two assembly initiator proteins, it binds directly to the 5'-end of the 23S rRNA, where it nucleates assembly of the 50S subunit. Functionally, one of the proteins that surrounds the polypeptide exit tunnel on the outside of the subunit. This is Large ribosomal subunit protein uL24 from Synechococcus elongatus (strain ATCC 33912 / PCC 7942 / FACHB-805) (Anacystis nidulans R2).